Reading from the N-terminus, the 713-residue chain is Undecaprenyl-diphosphooligosaccharide--protein glycotransferase (713 aa).

The Cytoplasmic portion of the chain corresponds to 1 to 11; it reads MLKKEYLKNPY. A helical transmembrane segment spans residues 12-35; that stretch reads LVLFAMIILAYVFSVLCRFYWIWW. The Periplasmic portion of the chain corresponds to 36-96; that stretch reads ASEFNEYFFN…YWLYKITPFS (61 aa). Residues 52-54 carry the DXD motif 1 motif; it reads SND. Asp-54 lines the Mn(2+) pocket. The chain crosses the membrane as a helical span at residues 97–122; sequence FESIILYMSTFLSSLVVIPIILLANE. The Cytoplasmic segment spans residues 123-125; sequence YKR. The helical transmembrane segment at 126-144 threads the bilayer; it reads PLMGFVAALLASVANSYYN. The Periplasmic portion of the chain corresponds to 145–152; that stretch reads RTMSGYYD. Mn(2+) is bound at residue Asp-152. The DXD motif 2 motif lies at 152–154; it reads DTD. The helical transmembrane segment at 153 to 174 threads the bilayer; the sequence is TDMLVIVLPMFILFFMVRMILK. Residues 175–176 lie on the Cytoplasmic side of the membrane; sequence KD. Residues 177–192 traverse the membrane as a helical segment; that stretch reads FFSLIALPLFIGIYLW. Topologically, residues 193 to 197 are periplasmic; it reads WYPSS. 194–196 is a binding site for [alpha-D-GalNAc-(1-&gt;4)]2-[beta-D-Glc-(1-&gt;3)]-[alpha-D-GalNAc-(1-&gt;4)]2-alpha-D-GalNAc-(1-&gt;3)-alpha-D-diNAcBac-tri-trans,hepta-cis-undecaprenyl diphosphate; that stretch reads YPS. Residues 198 to 215 form a helical membrane-spanning segment; sequence YTLNVALIGLFLIYTLIF. Topologically, residues 216-220 are cytoplasmic; it reads HRKEK. A helical transmembrane segment spans residues 221 to 233; it reads IFYIAVILSSLTL. The Periplasmic portion of the chain corresponds to 234–237; the sequence is SNIA. Residues 238–254 form a helical membrane-spanning segment; that stretch reads WFYQSAIIVILFALFAL. Over 255-260 the chain is Cytoplasmic; that stretch reads EQKRLN. The helical transmembrane segment at 261-278 threads the bilayer; it reads FMIIGILGSATLIFLILS. Residues 279–324 lie on the Periplasmic side of the membrane; sequence GGVDPILYQLKFYIFRNDESANLTQGFMYFNVNQTIQEVENVDFSE. Residue Tyr-291 participates in [alpha-D-GalNAc-(1-&gt;4)]2-[beta-D-Glc-(1-&gt;3)]-[alpha-D-GalNAc-(1-&gt;4)]2-alpha-D-GalNAc-(1-&gt;3)-alpha-D-diNAcBac-tri-trans,hepta-cis-undecaprenyl diphosphate binding. Residues 313 to 316 carry the TIXE motif motif; the sequence is TIQE. Position 316 (Glu-316) interacts with Mn(2+). A helical membrane pass occupies residues 325 to 347; sequence FMRRISGSEIVFLFSLFGFVWLL. The Cytoplasmic segment spans residues 348-352; the sequence is RKHKS. The chain crosses the membrane as a helical span at residues 353 to 369; sequence MIMALPILVLGFLALKG. Topologically, residues 370–373 are periplasmic; the sequence is GLRF. Arg-372 contributes to the [alpha-D-GalNAc-(1-&gt;4)]2-[beta-D-Glc-(1-&gt;3)]-[alpha-D-GalNAc-(1-&gt;4)]2-alpha-D-GalNAc-(1-&gt;3)-alpha-D-diNAcBac-tri-trans,hepta-cis-undecaprenyl diphosphate binding site. The helical transmembrane segment at 374-396 threads the bilayer; sequence TIYSVPVMALGFGFLLSEFKAIL. The Cytoplasmic segment spans residues 397–406; that stretch reads VKKYSQLTSN. The chain crosses the membrane as a helical span at residues 407–427; that stretch reads VCIVFATILTLAPVFIHIYNY. Over 428-713 the chain is Periplasmic; it reads KAPTVFSQNE…RDAKVFKLKI (286 aa). The segment at 457–459 is interacts with target acceptor peptide in protein substrate; it reads WWD. A WWDYG motif motif is present at residues 457–461; it reads WWDYG. Tyr-462 is a [alpha-D-GalNAc-(1-&gt;4)]2-[beta-D-Glc-(1-&gt;3)]-[alpha-D-GalNAc-(1-&gt;4)]2-alpha-D-GalNAc-(1-&gt;3)-alpha-D-diNAcBac-tri-trans,hepta-cis-undecaprenyl diphosphate binding site. N-linked (DATDGlc) asparagine glycosylation is present at Asn-534. The MI motif signature appears at 568–575; sequence MSLIFSTV.

The protein belongs to the STT3 family. The cofactor is Mg(2+). Mn(2+) serves as cofactor.

It localises to the cell inner membrane. The enzyme catalyses tritrans,heptacis-undecaprenyl diphosphooligosaccharide + [protein]-L-asparagine = tritrans,heptacis-undecaprenyl diphosphate + a glycoprotein with the oligosaccharide chain attached by N-beta-D-glycosyl linkage to protein L-asparagine.. Its pathway is protein modification; protein glycosylation. Functionally, oligosaccharyltransferase that catalyzes the transfer of a preassembled heptasaccharide from a lipid donor to an asparagine residue in nascent polypeptide chains, affording a beta-linked glycan to the asparagine side chain of target proteins. Oligosaccharyl transferase (OST) that catalyzes the initial transfer of a defined glycan (GalNAc(2)GlcGalNAc(3)Bac(NAc)(2) in eubacteria, where Bac(NAc)(2) is di-N-acetyl bacillosamine) from the lipid carrier undecaprenol-pyrophosphate to an asparagine residue within an Asp/Glu-Asn-X-Ser/Thr consensus motif in nascent polypeptide chains, the first step in protein N-glycosylation. This chain is Undecaprenyl-diphosphooligosaccharide--protein glycotransferase (pglB), found in Campylobacter jejuni (strain RM1221).